The following is a 157-amino-acid chain: 17.8 kDa class I heat shock protein (157 aa).

Residues 43-157 (ETAAFVNTHI…PEVKAIDISG (115 aa)) enclose the sHSP domain.

Belongs to the small heat shock protein (HSP20) family. In terms of assembly, forms oligomeric structures.

It is found in the cytoplasm. The sequence is that of 17.8 kDa class I heat shock protein from Daucus carota (Wild carrot).